The following is a 149-amino-acid chain: Transcriptional repressor NrdR (149 aa).

A zinc finger lies at 3–34 (CPFCSATDTKVIDSRLVADGHQVRRRRECAEC). The region spanning 49-139 (PRVVKQDGSR…VYRAFEDVSE (91 aa)) is the ATP-cone domain.

The protein belongs to the NrdR family. Requires Zn(2+) as cofactor.

Negatively regulates transcription of bacterial ribonucleotide reductase nrd genes and operons by binding to NrdR-boxes. The polypeptide is Transcriptional repressor NrdR (Shewanella woodyi (strain ATCC 51908 / MS32)).